Reading from the N-terminus, the 187-residue chain is Large ribosomal subunit protein uL5 (187 aa).

Belongs to the universal ribosomal protein uL5 family. Part of the 50S ribosomal subunit; part of the 5S rRNA/L5/L18/L25 subcomplex. Contacts the 5S rRNA and the P site tRNA. Forms a bridge to the 30S subunit in the 70S ribosome.

This is one of the proteins that bind and probably mediate the attachment of the 5S RNA into the large ribosomal subunit, where it forms part of the central protuberance. In the 70S ribosome it contacts protein S13 of the 30S subunit (bridge B1b), connecting the 2 subunits; this bridge is implicated in subunit movement. Contacts the P site tRNA; the 5S rRNA and some of its associated proteins might help stabilize positioning of ribosome-bound tRNAs. The sequence is that of Large ribosomal subunit protein uL5 from Mycobacteroides abscessus (strain ATCC 19977 / DSM 44196 / CCUG 20993 / CIP 104536 / JCM 13569 / NCTC 13031 / TMC 1543 / L948) (Mycobacterium abscessus).